The primary structure comprises 432 residues: Adenylosuccinate synthetase (432 aa).

GTP contacts are provided by residues 13–19 (GDEGKGK) and 41–43 (GHT). Catalysis depends on Asp14, which acts as the Proton acceptor. 2 residues coordinate Mg(2+): Asp14 and Gly41. IMP is bound by residues 14–17 (DEGK), 39–42 (NAGH), Thr130, Arg144, Gln225, Thr240, and Arg304. The active-site Proton donor is His42. Residue 300 to 306 (ATTGRSR) coordinates substrate. Residues Arg306, 332–334 (KLD), and 415–417 (STG) each bind GTP.

Belongs to the adenylosuccinate synthetase family. As to quaternary structure, homodimer. It depends on Mg(2+) as a cofactor.

Its subcellular location is the cytoplasm. It catalyses the reaction IMP + L-aspartate + GTP = N(6)-(1,2-dicarboxyethyl)-AMP + GDP + phosphate + 2 H(+). It functions in the pathway purine metabolism; AMP biosynthesis via de novo pathway; AMP from IMP: step 1/2. In terms of biological role, plays an important role in the de novo pathway of purine nucleotide biosynthesis. Catalyzes the first committed step in the biosynthesis of AMP from IMP. The sequence is that of Adenylosuccinate synthetase from Yersinia enterocolitica serotype O:8 / biotype 1B (strain NCTC 13174 / 8081).